The chain runs to 219 residues: Ion-translocating oxidoreductase complex subunit G (219 aa).

A helical membrane pass occupies residues 25–45 (GLLLGLFSLVSALMLALASDA). Thr-187 bears the FMN phosphoryl threonine mark.

This sequence belongs to the RnfG family. The complex is composed of six subunits: RnfA, RnfB, RnfC, RnfD, RnfE and RnfG. It depends on FMN as a cofactor.

The protein localises to the cellular chromatophore membrane. Functionally, part of a membrane-bound complex that couples electron transfer with translocation of ions across the membrane. This chain is Ion-translocating oxidoreductase complex subunit G, found in Cereibacter sphaeroides (strain ATCC 17029 / ATH 2.4.9) (Rhodobacter sphaeroides).